Here is a 374-residue protein sequence, read N- to C-terminus: Erythronate-4-phosphate dehydrogenase (374 aa).

Positions 53 and 75 each coordinate substrate. Position 160 (Asp-160) interacts with NAD(+). Arg-222 is a catalytic residue. Asp-246 provides a ligand contact to NAD(+). Glu-251 is an active-site residue. The active-site Proton donor is His-268. Gly-271 contacts NAD(+). Substrate is bound at residue Tyr-272.

Belongs to the D-isomer specific 2-hydroxyacid dehydrogenase family. PdxB subfamily. In terms of assembly, homodimer.

The protein resides in the cytoplasm. The catalysed reaction is 4-phospho-D-erythronate + NAD(+) = (R)-3-hydroxy-2-oxo-4-phosphooxybutanoate + NADH + H(+). The protein operates within cofactor biosynthesis; pyridoxine 5'-phosphate biosynthesis; pyridoxine 5'-phosphate from D-erythrose 4-phosphate: step 2/5. Functionally, catalyzes the oxidation of erythronate-4-phosphate to 3-hydroxy-2-oxo-4-phosphonooxybutanoate. The polypeptide is Erythronate-4-phosphate dehydrogenase (Psychrobacter sp. (strain PRwf-1)).